Here is a 1250-residue protein sequence, read N- to C-terminus: DNA-directed RNA polymerase subunit beta'' (1250 aa).

Zn(2+) contacts are provided by cysteine 224, cysteine 314, cysteine 321, and cysteine 324.

Belongs to the RNA polymerase beta' chain family. RpoC2 subfamily. In plastids the minimal PEP RNA polymerase catalytic core is composed of four subunits: alpha, beta, beta', and beta''. When a (nuclear-encoded) sigma factor is associated with the core the holoenzyme is formed, which can initiate transcription. It depends on Zn(2+) as a cofactor.

Its subcellular location is the plastid. It localises to the chloroplast. The catalysed reaction is RNA(n) + a ribonucleoside 5'-triphosphate = RNA(n+1) + diphosphate. In terms of biological role, DNA-dependent RNA polymerase catalyzes the transcription of DNA into RNA using the four ribonucleoside triphosphates as substrates. The protein is DNA-directed RNA polymerase subunit beta'' of Staurastrum punctulatum (Green alga).